Here is a 299-residue protein sequence, read N- to C-terminus: Protoheme IX farnesyltransferase 1 (299 aa).

8 helical membrane-spanning segments follow: residues 25-45, 47-67, 95-115, 119-139, 147-167, 173-193, 226-246, and 279-299; these read VVVL…RAGV, WTVL…AAAV, TGAL…LLTF, LTAW…TGFL, IVIG…AATG, PLLL…ALAI, ALLA…LYLI, and IWYL…LLNL.

This sequence belongs to the UbiA prenyltransferase family. Protoheme IX farnesyltransferase subfamily.

Its subcellular location is the cell inner membrane. The enzyme catalyses heme b + (2E,6E)-farnesyl diphosphate + H2O = Fe(II)-heme o + diphosphate. It participates in porphyrin-containing compound metabolism; heme O biosynthesis; heme O from protoheme: step 1/1. Functionally, converts heme B (protoheme IX) to heme O by substitution of the vinyl group on carbon 2 of heme B porphyrin ring with a hydroxyethyl farnesyl side group. This is Protoheme IX farnesyltransferase 1 from Pseudomonas fluorescens (strain Pf0-1).